Reading from the N-terminus, the 597-residue chain is Putative heat shock protein HSP 90-beta-3 (597 aa).

Residues asparagine 46, aspartate 88, and lysine 107 each contribute to the ATP site. Positions aspartate 201–lysine 241 are disordered. Residues isoleucine 204–aspartate 223 are compositionally biased toward acidic residues. Over residues glutamate 224–glycine 233 the composition is skewed to basic and acidic residues. Arginine 334 lines the ATP pocket. A coiled-coil region spans residues leucine 414 to lysine 446. Acidic residues predominate over residues aspartate 564 to proline 578. Positions aspartate 564–aspartate 597 are disordered. The TPR repeat-binding signature appears at methionine 593–aspartate 597.

Belongs to the heat shock protein 90 family. In terms of assembly, homodimer.

It localises to the cytoplasm. In terms of biological role, putative molecular chaperone that may promote the maturation, structural maintenance and proper regulation of specific target proteins. This is Putative heat shock protein HSP 90-beta-3 (HSP90AB3P) from Homo sapiens (Human).